A 262-amino-acid polypeptide reads, in one-letter code: GTP cyclohydrolase FolE2 (262 aa).

Belongs to the GTP cyclohydrolase IV family.

The enzyme catalyses GTP + H2O = 7,8-dihydroneopterin 3'-triphosphate + formate + H(+). The protein operates within cofactor biosynthesis; 7,8-dihydroneopterin triphosphate biosynthesis; 7,8-dihydroneopterin triphosphate from GTP: step 1/1. Functionally, converts GTP to 7,8-dihydroneopterin triphosphate. In Dichelobacter nodosus (strain VCS1703A), this protein is GTP cyclohydrolase FolE2.